Consider the following 359-residue polypeptide: 3-dehydroquinate synthase (359 aa).

Residues 71–76 (DGEAYK), 105–109 (GVIGD), 129–130 (TT), K142, and K151 contribute to the NAD(+) site. Residues E184, H247, and H264 each contribute to the Zn(2+) site.

Belongs to the sugar phosphate cyclases superfamily. Dehydroquinate synthase family. Co(2+) serves as cofactor. The cofactor is Zn(2+). Requires NAD(+) as cofactor.

It is found in the cytoplasm. It carries out the reaction 7-phospho-2-dehydro-3-deoxy-D-arabino-heptonate = 3-dehydroquinate + phosphate. The protein operates within metabolic intermediate biosynthesis; chorismate biosynthesis; chorismate from D-erythrose 4-phosphate and phosphoenolpyruvate: step 2/7. In terms of biological role, catalyzes the conversion of 3-deoxy-D-arabino-heptulosonate 7-phosphate (DAHP) to dehydroquinate (DHQ). The sequence is that of 3-dehydroquinate synthase from Burkholderia multivorans (strain ATCC 17616 / 249).